We begin with the raw amino-acid sequence, 510 residues long: Maturase K (510 aa).

This sequence belongs to the intron maturase 2 family. MatK subfamily.

Its subcellular location is the plastid. The protein resides in the chloroplast. Usually encoded in the trnK tRNA gene intron. Probably assists in splicing its own and other chloroplast group II introns. The sequence is that of Maturase K from Penstemon heterophyllus (Foothill penstemon).